Reading from the N-terminus, the 287-residue chain is PsbP domain-containing protein 1, chloroplastic (287 aa).

The protein belongs to the PsbP family. Partially associated with photosystem I (PSI) complex, but is not a subunit of the complex. Interacts with PsaA and PsaB, but not with PasF.

It localises to the plastid. It is found in the chloroplast thylakoid lumen. In terms of biological role, photosystem I assembly factor that assists the proper folding and integration of PsaB and PsaA into the thylakoid membrane. This Arabidopsis thaliana (Mouse-ear cress) protein is PsbP domain-containing protein 1, chloroplastic (PPD1).